The sequence spans 116 residues: Somatostatin (116 aa).

The signal sequence occupies residues 1-24 (MLSCRLQCALAALSIVLALGGVTC). Positions 25 to 88 (APSDPRLRQF…QDEMRLELQR (64 aa)) are excised as a propeptide. A43 carries the post-translational modification Alanine amide. A disordered region spans residues 62-99 (QTENDALEPEDLSQAAEQDEMRLELQRSANSNPAMAPR). The cysteines at positions 105 and 116 are disulfide-linked.

It belongs to the somatostatin family. Post-translationally, C-terminal amidation of the neuronostatin peptide is required for its biological activity, including for the regulation of mean arterial pressure.

The protein resides in the secreted. In terms of biological role, inhibits the secretion of pituitary hormones, including that of growth hormone/somatotropin (GH1), PRL, ACTH, luteinizing hormone (LH) and TSH. Also impairs ghrelin- and GnRH-stimulated secretion of GH1 and LH; the inhibition of ghrelin-stimulated secretion of GH1 can be further increased by neuronostatin. Functionally, may enhance low-glucose-induced glucagon release by pancreatic alpha cells. This effect may be mediated by binding to GPR107 and PKA activation. May regulate cardiac contractile function. May compromise cardiomyocyte viability. In the central nervous system, may impair memory retention and may affect hippocampal excitability. May also have anxiolytic and anorexigenic effects. May play a role in arterial pressure regulation. May inhibit basal, but not ghrelin- or GnRH-stimulated secretion of GH1 or LH, but does not affect the release of other pituitary hormones, including PRL, ACTH, FSH or TSH. Potentiates inhibitory action of somatostatin on ghrelin-stimulated secretion of GH1, but not that on GnRH-stimulated secretion of LH. The protein is Somatostatin (SST) of Canis lupus familiaris (Dog).